The chain runs to 147 residues: Hemoglobin subunit gamma-2 (147 aa).

Residues 3 to 147 enclose the Globin domain; the sequence is HFTEEDKATI…VASALSSRYH (145 aa). Thr13 bears the Phosphothreonine mark. Residues Ser45, Ser51, and Ser53 each carry the phosphoserine modification. Position 60 is an N6-acetyllysine (Lys60). A heme b-binding site is contributed by His64. Lys83 is modified (N6-acetyllysine). His93 lines the heme b pocket. Cys94 carries the S-nitrosocysteine modification. Phosphoserine is present on residues Ser140, Ser143, and Ser144.

This sequence belongs to the globin family. In terms of assembly, heterotetramer of two alpha chains and two gamma chains in fetal hemoglobin (Hb F). Red blood cells.

Gamma chains make up the fetal hemoglobin F, in combination with alpha chains. In Hylobates lar (Lar gibbon), this protein is Hemoglobin subunit gamma-2 (HBG2).